We begin with the raw amino-acid sequence, 490 residues long: Phosphoglucosamine mutase (490 aa).

Catalysis depends on S139, which acts as the Phosphoserine intermediate. The Mg(2+) site is built by S139, D279, D281, and D283. Position 139 is a phosphoserine (S139).

Belongs to the phosphohexose mutase family. Mg(2+) is required as a cofactor. Post-translationally, activated by phosphorylation.

It carries out the reaction alpha-D-glucosamine 1-phosphate = D-glucosamine 6-phosphate. In terms of biological role, catalyzes the conversion of glucosamine-6-phosphate to glucosamine-1-phosphate. The sequence is that of Phosphoglucosamine mutase from Nostoc sp. (strain PCC 7120 / SAG 25.82 / UTEX 2576).